An 87-amino-acid chain; its full sequence is U3-theraphotoxin-Hhn1a 16 (87 aa).

The first 24 residues, 1–24 (MVNMKASMFLTFAGLVLLFVVCYA), serve as a signal peptide directing secretion. A propeptide spanning residues 25–52 (SESEEKEFPKEMLSSIFAVDNDFKQGER) is cleaved from the precursor. 3 disulfides stabilise this stretch: C54–C67, C61–C72, and C66–C79.

It belongs to the neurotoxin 10 (Hwtx-1) family. 51 (Hntx-8) subfamily. Hntx-8 sub-subfamily. Expressed by the venom gland.

It is found in the secreted. Ion channel inhibitor. The sequence is that of U3-theraphotoxin-Hhn1a 16 from Cyriopagopus hainanus (Chinese bird spider).